Here is a 206-residue protein sequence, read N- to C-terminus: Acireductone dioxygenase (206 aa).

Fe(2+) is bound by residues H102, H104, E108, and H146. 4 residues coordinate Ni(2+): H102, H104, E108, and H146.

Belongs to the acireductone dioxygenase (ARD) family. As to quaternary structure, monomer. Fe(2+) serves as cofactor. Requires Ni(2+) as cofactor.

The catalysed reaction is 1,2-dihydroxy-5-(methylsulfanyl)pent-1-en-3-one + O2 = 3-(methylsulfanyl)propanoate + CO + formate + 2 H(+). It catalyses the reaction 1,2-dihydroxy-5-(methylsulfanyl)pent-1-en-3-one + O2 = 4-methylsulfanyl-2-oxobutanoate + formate + 2 H(+). It functions in the pathway amino-acid biosynthesis; L-methionine biosynthesis via salvage pathway; L-methionine from S-methyl-5-thio-alpha-D-ribose 1-phosphate: step 5/6. Catalyzes 2 different reactions between oxygen and the acireductone 1,2-dihydroxy-3-keto-5-methylthiopentene (DHK-MTPene) depending upon the metal bound in the active site. Fe-containing acireductone dioxygenase (Fe-ARD) produces formate and 2-keto-4-methylthiobutyrate (KMTB), the alpha-ketoacid precursor of methionine in the methionine recycle pathway. Ni-containing acireductone dioxygenase (Ni-ARD) produces methylthiopropionate, carbon monoxide and formate, and does not lie on the methionine recycle pathway. This is Acireductone dioxygenase from Frankia alni (strain DSM 45986 / CECT 9034 / ACN14a).